Consider the following 271-residue polypeptide: Small ribosomal subunit protein uS2 (271 aa).

A compositionally biased stretch (basic and acidic residues) spans 229–242; sequence KERKGKDAEEELKK. Residues 229–271 are disordered; that stretch reads KERKGKDAEEELKKAAAPKAAPAAEAAPAAEAPAAPVVEAAAE. The span at 243-271 shows a compositional bias: low complexity; the sequence is AAAPKAAPAAEAAPAAEAPAAPVVEAAAE.

The protein belongs to the universal ribosomal protein uS2 family.

The chain is Small ribosomal subunit protein uS2 from Nitratidesulfovibrio vulgaris (strain DSM 19637 / Miyazaki F) (Desulfovibrio vulgaris).